We begin with the raw amino-acid sequence, 464 residues long: ATP synthase subunit beta (464 aa).

153 to 160 contacts ATP; that stretch reads GGAGVGKT.

The protein belongs to the ATPase alpha/beta chains family. In terms of assembly, F-type ATPases have 2 components, CF(1) - the catalytic core - and CF(0) - the membrane proton channel. CF(1) has five subunits: alpha(3), beta(3), gamma(1), delta(1), epsilon(1). CF(0) has three main subunits: a(1), b(2) and c(9-12). The alpha and beta chains form an alternating ring which encloses part of the gamma chain. CF(1) is attached to CF(0) by a central stalk formed by the gamma and epsilon chains, while a peripheral stalk is formed by the delta and b chains.

Its subcellular location is the cell inner membrane. It carries out the reaction ATP + H2O + 4 H(+)(in) = ADP + phosphate + 5 H(+)(out). Its function is as follows. Produces ATP from ADP in the presence of a proton gradient across the membrane. The catalytic sites are hosted primarily by the beta subunits. This Burkholderia lata (strain ATCC 17760 / DSM 23089 / LMG 22485 / NCIMB 9086 / R18194 / 383) protein is ATP synthase subunit beta.